The following is a 594-amino-acid chain: Elongation factor 4 (594 aa).

The tr-type G domain maps to 2 to 184 (KNIRNFSIIA…TIVAKVPAPE (183 aa)). GTP is bound by residues 14 to 19 (DHGKST) and 131 to 134 (NKID).

This sequence belongs to the TRAFAC class translation factor GTPase superfamily. Classic translation factor GTPase family. LepA subfamily.

The protein resides in the cell inner membrane. It carries out the reaction GTP + H2O = GDP + phosphate + H(+). Its function is as follows. Required for accurate and efficient protein synthesis under certain stress conditions. May act as a fidelity factor of the translation reaction, by catalyzing a one-codon backward translocation of tRNAs on improperly translocated ribosomes. Back-translocation proceeds from a post-translocation (POST) complex to a pre-translocation (PRE) complex, thus giving elongation factor G a second chance to translocate the tRNAs correctly. Binds to ribosomes in a GTP-dependent manner. This is Elongation factor 4 from Francisella tularensis subsp. novicida (strain U112).